The sequence spans 695 residues: MELGSCFKTYEDFKECFSAYKKETRCSFIVRDCISVRFHNLNNGTSFREDILYVQVKFVCIRTQSNRKKTRKVDRCPAYLLLQYNETLDRLFISELNTQHIHADSNASGGIPASKPQAICLHKLPPVQLSIRKDLDTAEKPSVEPSFCLDKIHKPSNPEQEGISPSDMAKIAKVMKNFLTVDEGSMASFSVGTSQDLDRLSFQSSKMSDLFARFPETLLLHRVENSQGHILYAFLVENKERESRVVHFAVLKAETAPSVAKMLNIFTEFNSDWPKVKMVFVDPSFPHRAILQEIFPSARTLLSIYHTTRLLEKKLHQSSVNASFKRLMKEALREAVFVSSDASLKNLCEMSQVLLDEELFSFLQAHWFSCELLWYIHVRKGLHACNTYMDSLDIVTSKVSSLFREQRSLLDCILHFVDYIDFFNTKGLKSLPTNAPKLRRTRLPSTPPRPKKPFRICGGGDTRLPVEEVEETKADSAQSQLPQPQDQSSKAGMLDILHQSGSELAYKLCHNEWEVVQNSTHLVDEAGSSVAVQLLENSHQVSKDGCSCSCSFQQCYHLPCRHILALLHTSQQPVGEAMVCCRWQKKYQHLLDPNGELQDRGIIPNTDQPEKQGQNHMIRDLSRELANLLMQTEGPELEERCSTLRKIVDIWADPYQLPESSQQPVDFRDVGCLPFLWGKLEEADSPPLAEAMVHD.

The disordered stretch occupies residues 434 to 490 (NAPKLRRTRLPSTPPRPKKPFRICGGGDTRLPVEEVEETKADSAQSQLPQPQDQSSK). A compositionally biased stretch (low complexity) spans 475–489 (DSAQSQLPQPQDQSS). The segment at 530-571 (VAVQLLENSHQVSKDGCSCSCSFQQCYHLPCRHILALLHTSQ) adopts an SWIM-type zinc-finger fold.

The polypeptide is Zinc finger SWIM domain-containing protein 3 (Zswim3) (Mus musculus (Mouse)).